Here is a 305-residue protein sequence, read N- to C-terminus: Ribonuclease BN (305 aa).

Zn(2+) contacts are provided by H64, H66, D68, H69, H141, D212, and H270. Catalysis depends on D68, which acts as the Proton acceptor.

This sequence belongs to the RNase Z family. RNase BN subfamily. Homodimer. Zn(2+) serves as cofactor.

Its function is as follows. Zinc phosphodiesterase, which has both exoribonuclease and endoribonuclease activities. This is Ribonuclease BN from Escherichia coli O127:H6 (strain E2348/69 / EPEC).